A 161-amino-acid chain; its full sequence is Cytochrome b6-f complex subunit 4 (161 aa).

The next 3 membrane-spanning stretches (helical) occupy residues 37-57 (LLYI…GLAV), 96-116 (LLGV…PFIE), and 132-152 (SVFL…TLPI).

It belongs to the cytochrome b family. PetD subfamily. The 4 large subunits of the cytochrome b6-f complex are cytochrome b6, subunit IV (17 kDa polypeptide, PetD), cytochrome f and the Rieske protein, while the 4 small subunits are PetG, PetL, PetM and PetN. The complex functions as a dimer.

The protein resides in the cellular thylakoid membrane. Functionally, component of the cytochrome b6-f complex, which mediates electron transfer between photosystem II (PSII) and photosystem I (PSI), cyclic electron flow around PSI, and state transitions. The sequence is that of Cytochrome b6-f complex subunit 4 from Acaryochloris marina (strain MBIC 11017).